The chain runs to 250 residues: NADH-quinone oxidoreductase subunit C (250 aa).

Disordered regions lie at residues 1-33 and 228-250; these read MSDD…PTGE and LGGV…RSYN.

This sequence belongs to the complex I 30 kDa subunit family. In terms of assembly, NDH-1 is composed of 14 different subunits. Subunits NuoB, C, D, E, F, and G constitute the peripheral sector of the complex.

Its subcellular location is the cell membrane. It catalyses the reaction a quinone + NADH + 5 H(+)(in) = a quinol + NAD(+) + 4 H(+)(out). NDH-1 shuttles electrons from NADH, via FMN and iron-sulfur (Fe-S) centers, to quinones in the respiratory chain. The immediate electron acceptor for the enzyme in this species is believed to be a menaquinone. Couples the redox reaction to proton translocation (for every two electrons transferred, four hydrogen ions are translocated across the cytoplasmic membrane), and thus conserves the redox energy in a proton gradient. In Nocardioides sp. (strain ATCC BAA-499 / JS614), this protein is NADH-quinone oxidoreductase subunit C.